The primary structure comprises 110 residues: Large ribosomal subunit protein uL22 (110 aa).

This sequence belongs to the universal ribosomal protein uL22 family. As to quaternary structure, part of the 50S ribosomal subunit.

This protein binds specifically to 23S rRNA; its binding is stimulated by other ribosomal proteins, e.g. L4, L17, and L20. It is important during the early stages of 50S assembly. It makes multiple contacts with different domains of the 23S rRNA in the assembled 50S subunit and ribosome. Functionally, the globular domain of the protein is located near the polypeptide exit tunnel on the outside of the subunit, while an extended beta-hairpin is found that lines the wall of the exit tunnel in the center of the 70S ribosome. This Klebsiella pneumoniae (strain 342) protein is Large ribosomal subunit protein uL22.